The primary structure comprises 580 residues: Arginine--tRNA ligase (580 aa).

Residues proline 123 to histidine 133 carry the 'HIGH' region motif.

This sequence belongs to the class-I aminoacyl-tRNA synthetase family. As to quaternary structure, monomer.

It is found in the cytoplasm. The catalysed reaction is tRNA(Arg) + L-arginine + ATP = L-arginyl-tRNA(Arg) + AMP + diphosphate. The sequence is that of Arginine--tRNA ligase from Pseudoalteromonas translucida (strain TAC 125).